A 568-amino-acid chain; its full sequence is Sentrin-specific protease 3 (568 aa).

The segment at M1–R119 is disordered. 3 positions are modified to phosphoserine: S52, S71, and S73. A compositionally biased stretch (acidic residues) spans A72–V87. A compositionally biased stretch (basic residues) spans R106–R119. 2 consecutive short sequence motifs (nuclear localization signal) follow at residues R119–R122 and R147–R153. Residues L155 to P174 are disordered. S163 is subject to Phosphoserine. T170 bears the Phosphothreonine mark. 4 positions are modified to phosphoserine: S175, S182, S206, and S226. A protease region spans residues H380–L537. Residues H459 and D476 contribute to the active site. C526 acts as the Nucleophile in catalysis.

Belongs to the peptidase C48 family. In terms of assembly, component of some MLL1/MLL complex, at least composed of the core components KMT2A/MLL1, ASH2L, HCFC1/HCF1, WDR5 and RBBP5, as well as the facultative components BACC1, CHD8, E2F6, HSP70, INO80C, KANSL1, LAS1L, MAX, MCRS1, MGA, MYST1/MOF, PELP1, PHF20, PRP31, RING2, RUVB1/TIP49A, RUVB2/TIP49B, SENP3, TAF1, TAF4, TAF6, TAF7, TAF9 and TEX10. Interacts with EP300, NPM1 and CDCA8. Component of the 5FMC complex, at least composed of PELP1, LAS1L, TEX10, WDR18 and SENP3; the complex interacts with methylated CHTOP and ZNF148. Interacts with NOL9. Interacts with CCAR2.

The protein resides in the nucleus. It is found in the nucleolus. The protein localises to the nucleoplasm. Its subcellular location is the cytoplasm. On oxidative stress, SENP3 degradation is blocked by inhibition of its ubiquitination, which stabilizes it as it accumulates in the nucleoplasm. Protease that releases SUMO2 and SUMO3 monomers from sumoylated substrates, but has only weak activity against SUMO1 conjugates. Deconjugates SUMO2 from MEF2D, which increases its transcriptional activation capability. Deconjugates SUMO2 and SUMO3 from CDCA8. Redox sensor that, when redistributed into nucleoplasm, can act as an effector to enhance HIF1A transcriptional activity by desumoylating EP300. Required for rRNA processing through deconjugation of SUMO2 and SUMO3 from nucleophosmin, NPM1. Plays a role in the regulation of sumoylation status of ZNF148. Functions as a component of the Five Friends of Methylated CHTOP (5FMC) complex; the 5FMC complex is recruited to ZNF148 by methylated CHTOP, leading to desumoylation of ZNF148 and subsequent transactivation of ZNF148 target genes. Deconjugates SUMO2 from KAT5. Catalyzes desumoylation of MRE11. In Mus musculus (Mouse), this protein is Sentrin-specific protease 3 (Senp3).